We begin with the raw amino-acid sequence, 348 residues long: Uroporphyrinogen decarboxylase (348 aa).

Substrate is bound by residues arginine 29–arginine 33, aspartate 79, tyrosine 155, threonine 210, and histidine 326.

This sequence belongs to the uroporphyrinogen decarboxylase family. In terms of assembly, homodimer.

It is found in the cytoplasm. It catalyses the reaction uroporphyrinogen III + 4 H(+) = coproporphyrinogen III + 4 CO2. It participates in porphyrin-containing compound metabolism; protoporphyrin-IX biosynthesis; coproporphyrinogen-III from 5-aminolevulinate: step 4/4. Catalyzes the decarboxylation of four acetate groups of uroporphyrinogen-III to yield coproporphyrinogen-III. The protein is Uroporphyrinogen decarboxylase of Rhodospirillum rubrum (strain ATCC 11170 / ATH 1.1.1 / DSM 467 / LMG 4362 / NCIMB 8255 / S1).